Consider the following 185-residue polypeptide: uncharacterized protein (185 aa).

Residues 17 to 137 enclose the G domain; the sequence is GKSSIMNALF…QKPIIVVINK (121 aa).

This is an uncharacterized protein from Methanocaldococcus jannaschii (strain ATCC 43067 / DSM 2661 / JAL-1 / JCM 10045 / NBRC 100440) (Methanococcus jannaschii).